The chain runs to 679 residues: MSAPKNEMYYSLLEWFKTLNLNAPHADAESLADGVALAQALNQFAPESFTDAWLSKIKASAVGSNWRLRMSNLKKVTQSVYDYYSDVLNYSLSDFSKPDLQRIAEKCDLGELERLLQLVLGCAVNCAEKQSYITEIMCLEEELQANIMRALQELEATRQASTPEGGVASSLSRGSRTGLLDSKAVQEDRDALAQKCFETEKKMLLLIDEKTNLQQELHKLQQEFARLEQHSTVIGDDGVSLGPVQTGSVRYNELRRQLDLLKEELLQSEGAREDLKIKAQQQDTDLLHMQMRIEELMKSSAEVTTLKDEVDVLRESNDKLKICEAQLDTYKKKLEDYNDLKKQVKILEERSADYVQQNAQFEEDAKRYANTKGQVELFKKEIQDLHAKLDAESSKNVKLEFDNKNLEGKNLALQRAKDSLLKERDNLREAVDELKCGQLSSSTALTGTTVSRELQPSATVEKLQRLEAENKALREGQGGQTALAQLLDDANKRCENLREQLKTANERILSLSHASQSDDPILKESEFGKQIKQLMELNEQKTLQLEEAVTQSTSLQCKVTQLETNLSAREQEILVYDAKYRKCVEKAKEVIKSIDPRIASALDASVLEKSADLVEEEPKPKMSVMEEQLMTSAFYRLGVNAQRDAIDSKLAILMGSGQTFLARQRQSAPRKSLSAMKSK.

Positions 6 to 123 (NEMYYSLLEW…RLLQLVLGCA (118 aa)) constitute a Calponin-homology (CH) domain. Coiled-coil stretches lie at residues 135–437 (EIMC…LKCG) and 480–574 (QTAL…QEIL).

The protein belongs to the hook family. Homodimer. Interacts with microtubules via its N-terminus.

The protein localises to the cytoplasm. It is found in the cytoskeleton. The protein resides in the endosome. Its subcellular location is the synapse. Its function is as follows. Involved in endocytic trafficking by stabilizing organelles of the endocytic pathway. Probably acts as a cytoskeletal linker protein required to tether endosome vesicles to the cytoskeleton. Involved in modulation of endocytosis at stages required for down-regulation of membrane proteins that control synapse size. Not involved in synaptic vesicle recycling. Required in R7 cells for boss endocytosis into multivesicular bodies (MVBs). Has a role in regulating adult longevity. The chain is Protein hook from Drosophila simulans (Fruit fly).